A 293-amino-acid chain; its full sequence is MTDSPTAGTPYGTLPPASPLPQRRPVSLPRLAQMREAGEKITMLTAYDATFAAVADAAGVECILVGDSLGMVCQGLPSTVGVTLEHMAYHTASVARGLHRVQGTAWLIADLPYGSYAESREQALRSACQLMQAGAHMVKLEGGGWTAPTVQFLVERGVPVCAHLGLTPQTVHALGGYRVQGKGDQAAQQLRRQALELQDAGAAMLVLEMVPTPLARDLTQALPRCHTIGIGAGSGTAGQVLVMHDMLGINLGKNPKFVHDFMRDAGSVRGAIEAYVQAVKQGRFPDDALHAWN.

A disordered region spans residues 1 to 25; the sequence is MTDSPTAGTPYGTLPPASPLPQRRP. Residues Asp-67 and Asp-110 each coordinate Mg(2+). 3-methyl-2-oxobutanoate is bound by residues 67 to 68, Asp-110, and Lys-139; that span reads DS. A Mg(2+)-binding site is contributed by Glu-141. The Proton acceptor role is filled by Glu-208.

Belongs to the PanB family. As to quaternary structure, homodecamer; pentamer of dimers. Mg(2+) is required as a cofactor.

It localises to the cytoplasm. The enzyme catalyses 3-methyl-2-oxobutanoate + (6R)-5,10-methylene-5,6,7,8-tetrahydrofolate + H2O = 2-dehydropantoate + (6S)-5,6,7,8-tetrahydrofolate. It functions in the pathway cofactor biosynthesis; (R)-pantothenate biosynthesis; (R)-pantoate from 3-methyl-2-oxobutanoate: step 1/2. In terms of biological role, catalyzes the reversible reaction in which hydroxymethyl group from 5,10-methylenetetrahydrofolate is transferred onto alpha-ketoisovalerate to form ketopantoate. In Acidovorax sp. (strain JS42), this protein is 3-methyl-2-oxobutanoate hydroxymethyltransferase.